A 260-amino-acid polypeptide reads, in one-letter code: Methylthioribulose-1-phosphate dehydratase (260 aa).

Residues 1 to 26 are disordered; the sequence is MTPPTTGLPAENTTDDNDHLVQSDDP. Over residues 16–26 the composition is skewed to basic and acidic residues; sequence DNDHLVQSDDP. Cys109 is a binding site for substrate. Zn(2+)-binding residues include His127 and His129. The active-site Proton donor/acceptor is the Glu154. His211 contacts Zn(2+).

The protein belongs to the aldolase class II family. MtnB subfamily. Zn(2+) serves as cofactor.

The protein localises to the cytoplasm. The catalysed reaction is 5-(methylsulfanyl)-D-ribulose 1-phosphate = 5-methylsulfanyl-2,3-dioxopentyl phosphate + H2O. It functions in the pathway amino-acid biosynthesis; L-methionine biosynthesis via salvage pathway; L-methionine from S-methyl-5-thio-alpha-D-ribose 1-phosphate: step 2/6. Functionally, catalyzes the dehydration of methylthioribulose-1-phosphate (MTRu-1-P) into 2,3-diketo-5-methylthiopentyl-1-phosphate (DK-MTP-1-P). This Podospora anserina (strain S / ATCC MYA-4624 / DSM 980 / FGSC 10383) (Pleurage anserina) protein is Methylthioribulose-1-phosphate dehydratase.